The chain runs to 281 residues: Pantothenate synthetase (281 aa).

An ATP-binding site is contributed by 30 to 37; sequence MGYLHEGH. The Proton donor role is filled by histidine 37. Glutamine 61 serves as a coordination point for (R)-pantoate. Glutamine 61 lines the beta-alanine pocket. Position 147-150 (147-150) interacts with ATP; that stretch reads GEKD. Glutamine 153 provides a ligand contact to (R)-pantoate. Residues isoleucine 176 and 184–187 each bind ATP; that span reads KSSR.

This sequence belongs to the pantothenate synthetase family. In terms of assembly, homodimer.

The protein resides in the cytoplasm. It catalyses the reaction (R)-pantoate + beta-alanine + ATP = (R)-pantothenate + AMP + diphosphate + H(+). It functions in the pathway cofactor biosynthesis; (R)-pantothenate biosynthesis; (R)-pantothenate from (R)-pantoate and beta-alanine: step 1/1. Catalyzes the condensation of pantoate with beta-alanine in an ATP-dependent reaction via a pantoyl-adenylate intermediate. This is Pantothenate synthetase from Clostridium botulinum (strain ATCC 19397 / Type A).